The sequence spans 341 residues: Tetraacyldisaccharide 4'-kinase (341 aa).

Residue 54–61 (TVGGAGKT) coordinates ATP.

It belongs to the LpxK family.

The enzyme catalyses a lipid A disaccharide + ATP = a lipid IVA + ADP + H(+). The protein operates within glycolipid biosynthesis; lipid IV(A) biosynthesis; lipid IV(A) from (3R)-3-hydroxytetradecanoyl-[acyl-carrier-protein] and UDP-N-acetyl-alpha-D-glucosamine: step 6/6. Its function is as follows. Transfers the gamma-phosphate of ATP to the 4'-position of a tetraacyldisaccharide 1-phosphate intermediate (termed DS-1-P) to form tetraacyldisaccharide 1,4'-bis-phosphate (lipid IVA). The polypeptide is Tetraacyldisaccharide 4'-kinase (Brucella melitensis biotype 1 (strain ATCC 23456 / CCUG 17765 / NCTC 10094 / 16M)).